The chain runs to 375 residues: Flagellar P-ring protein (375 aa).

An N-terminal signal peptide occupies residues Met1–Ala23.

Belongs to the FlgI family. In terms of assembly, the basal body constitutes a major portion of the flagellar organelle and consists of four rings (L,P,S, and M) mounted on a central rod.

It is found in the bacterial flagellum basal body. Assembles around the rod to form the L-ring and probably protects the motor/basal body from shearing forces during rotation. In Buchnera aphidicola subsp. Baizongia pistaciae (strain Bp), this protein is Flagellar P-ring protein.